Reading from the N-terminus, the 395-residue chain is Xylose isomerase (395 aa).

Active-site residues include His54 and Asp57. Residues Glu181, Glu217, His220, Asp245, Asp255, Asp257, and Asp293 each coordinate Mg(2+).

The protein belongs to the xylose isomerase family. As to quaternary structure, homotetramer. The cofactor is Mg(2+).

The protein localises to the cytoplasm. The catalysed reaction is alpha-D-xylose = alpha-D-xylulofuranose. In Arthrobacter sp. (strain NRRL B3728), this protein is Xylose isomerase (xylA).